The primary structure comprises 297 residues: Inactive beta selinene synthase (297 aa).

It belongs to the terpene synthase family. As to quaternary structure, monomer.

It localises to the cytoplasm. Functionally, inactive selinene synthase. The protein is Inactive beta selinene synthase of Zea mays (Maize).